A 364-amino-acid chain; its full sequence is Fructose-bisphosphate aldolase B (364 aa).

N-acetylalanine is present on A2. N6-succinyllysine is present on K13. Residue S36 is modified to Phosphoserine. T39 is modified (phosphothreonine). Residue R43 coordinates beta-D-fructose 1,6-bisphosphate. S89 carries the phosphoserine modification. T119 carries the post-translational modification Phosphothreonine. Residue K121 is modified to N6-succinyllysine. Position 132 is a phosphoserine (S132). E188 acts as the Proton acceptor in catalysis. The Schiff-base intermediate with dihydroxyacetone-P role is filled by K230. Phosphoserine occurs at positions 272, 276, 299, and 301. Residue 272-274 participates in beta-D-fructose 1,6-bisphosphate binding; the sequence is SGG. R304 contributes to the beta-D-fructose 1,6-bisphosphate binding site. At S309 the chain carries Phosphoserine. N6-succinyllysine is present on K317.

Belongs to the class I fructose-bisphosphate aldolase family. In terms of assembly, homotetramer. Interacts with BBS1, BBS2, BBS4 and BBS7. Forms a ternary complex with G6PD and TP53; this interaction is direct.

It localises to the cytoplasm. The protein resides in the cytosol. It is found in the cytoskeleton. The protein localises to the microtubule organizing center. Its subcellular location is the centrosome. It localises to the centriolar satellite. It catalyses the reaction beta-D-fructose 1,6-bisphosphate = D-glyceraldehyde 3-phosphate + dihydroxyacetone phosphate. The enzyme catalyses beta-D-fructose 1-phosphate = D-glyceraldehyde + dihydroxyacetone phosphate. It participates in carbohydrate degradation; glycolysis; D-glyceraldehyde 3-phosphate and glycerone phosphate from D-glucose: step 4/4. Its pathway is carbohydrate biosynthesis; gluconeogenesis. The protein operates within carbohydrate metabolism; fructose metabolism. Catalyzes the aldol cleavage of fructose 1,6-biphosphate to form two triosephosphates dihydroxyacetone phosphate and D-glyceraldehyde 3-phosphate in glycolysis as well as the reverse stereospecific aldol addition reaction in gluconeogenesis. In fructolysis, metabolizes fructose 1-phosphate derived from the phosphorylation of dietary fructose by fructokinase into dihydroxyacetone phosphate and D-glyceraldehyde. Acts as an adapter independently of its enzymatic activity, exerts a tumor suppressor role by stabilizing the ternary complex with G6PD and TP53 to inhibit G6PD activity and keep oxidative pentose phosphate metabolism in check. The protein is Fructose-bisphosphate aldolase B (ALDOB) of Pongo abelii (Sumatran orangutan).